Here is a 234-residue protein sequence, read N- to C-terminus: Large ribosomal subunit protein uL1 (234 aa).

It belongs to the universal ribosomal protein uL1 family. In terms of assembly, part of the 50S ribosomal subunit.

Functionally, binds directly to 23S rRNA. The L1 stalk is quite mobile in the ribosome, and is involved in E site tRNA release. Protein L1 is also a translational repressor protein, it controls the translation of the L11 operon by binding to its mRNA. In Aliivibrio fischeri (strain MJ11) (Vibrio fischeri), this protein is Large ribosomal subunit protein uL1.